Consider the following 185-residue polypeptide: ATP synthase subunit delta (185 aa).

Belongs to the ATPase delta chain family. As to quaternary structure, F-type ATPases have 2 components, F(1) - the catalytic core - and F(0) - the membrane proton channel. F(1) has five subunits: alpha(3), beta(3), gamma(1), delta(1), epsilon(1). F(0) has three main subunits: a(1), b(2) and c(10-14). The alpha and beta chains form an alternating ring which encloses part of the gamma chain. F(1) is attached to F(0) by a central stalk formed by the gamma and epsilon chains, while a peripheral stalk is formed by the delta and b chains.

It localises to the cell inner membrane. F(1)F(0) ATP synthase produces ATP from ADP in the presence of a proton or sodium gradient. F-type ATPases consist of two structural domains, F(1) containing the extramembraneous catalytic core and F(0) containing the membrane proton channel, linked together by a central stalk and a peripheral stalk. During catalysis, ATP synthesis in the catalytic domain of F(1) is coupled via a rotary mechanism of the central stalk subunits to proton translocation. In terms of biological role, this protein is part of the stalk that links CF(0) to CF(1). It either transmits conformational changes from CF(0) to CF(1) or is implicated in proton conduction. The sequence is that of ATP synthase subunit delta from Pelagibacter ubique (strain HTCC1062).